The sequence spans 175 residues: Peptide deformylase (175 aa).

Fe cation contacts are provided by cysteine 98 and histidine 140. The active site involves glutamate 141. Position 144 (histidine 144) interacts with Fe cation.

This sequence belongs to the polypeptide deformylase family. Fe(2+) is required as a cofactor.

The enzyme catalyses N-terminal N-formyl-L-methionyl-[peptide] + H2O = N-terminal L-methionyl-[peptide] + formate. Functionally, removes the formyl group from the N-terminal Met of newly synthesized proteins. Requires at least a dipeptide for an efficient rate of reaction. N-terminal L-methionine is a prerequisite for activity but the enzyme has broad specificity at other positions. This chain is Peptide deformylase, found in Bradyrhizobium sp. (strain ORS 278).